The primary structure comprises 430 residues: MSLFTPLSETNVRSHTNTSSVFCRRIKTLVAGLTALGLMLAAVSASAGFYVSGKQLREGNGNNFIMRGVNLPHAWFPDRTNQALADISATGANSVRVVLSNGRLWSRTPESQVASIISQAKARQLITVLEVHDTTGYGEQTAATLSEAVDYWIAIRNALIGQEDYVIINIGNEPFGNGQSASTWLNLHRDAINRLRNAGFTHTLMVDAANWGQDWENIMRNNASSLFNSDPRRNVIFSVHMYEVYPNDTAVNNYMSAFNSMNLPLVVGEFAANHFGSYVDAGSIMARAQQYGFGYLGWSWSGNSSNLSALDVVTNFNAGSLTTWGNLLINNTNGIRNTSRKATIFGGSGSSSSSAGSCGTAPNGYPYCCNASSATGNGWGWENNRSCVVATTSTSCNWYGTSYPICVNTSSGWGWENNRSCIAASTCAAQ.

Glu-173 (proton donor) is an active-site residue. Residue Glu-269 is the Nucleophile of the active site. 2 CBM10 domains span residues 357-390 (SCGT…CVVA) and 395-424 (SCNW…CIAA).

This sequence belongs to the glycosyl hydrolase 5 (cellulase A) family.

The enzyme catalyses Random hydrolysis of (1-&gt;4)-beta-D-mannosidic linkages in mannans, galactomannans and glucomannans.. Catalyzes the endo hydrolysis of beta-1,4-linked mannan, galactomannan and glucomannan. It is able to hydrolyze mannosidic linkages that are flanked by mannose or glucose. The sequence is that of Mannan endo-1,4-beta-mannosidase from Cellvibrio japonicus (strain Ueda107) (Pseudomonas fluorescens subsp. cellulosa).